The sequence spans 388 residues: GTPase Obg (388 aa).

The 159-residue stretch at 1–159 (MKFVDEAVIR…RSLKLELLLL (159 aa)) folds into the Obg domain. Positions 160–333 (ADVGLLGMPN…LATKLLDFIQ (174 aa)) constitute an OBG-type G domain. Residues 166–173 (GMPNAGKS), 191–195 (FTTLV), 213–216 (DIPG), 283–286 (NKAD), and 314–316 (SAY) contribute to the GTP site. Mg(2+) is bound by residues Ser173 and Thr193.

The protein belongs to the TRAFAC class OBG-HflX-like GTPase superfamily. OBG GTPase family. In terms of assembly, monomer. It depends on Mg(2+) as a cofactor.

It localises to the cytoplasm. An essential GTPase which binds GTP, GDP and possibly (p)ppGpp with moderate affinity, with high nucleotide exchange rates and a fairly low GTP hydrolysis rate. Plays a role in control of the cell cycle, stress response, ribosome biogenesis and in those bacteria that undergo differentiation, in morphogenesis control. The chain is GTPase Obg from Shewanella sp. (strain MR-4).